The sequence spans 407 residues: Tryptophan synthase beta chain (407 aa).

N6-(pyridoxal phosphate)lysine is present on Lys-91.

Belongs to the TrpB family. As to quaternary structure, tetramer of two alpha and two beta chains. Pyridoxal 5'-phosphate serves as cofactor.

The catalysed reaction is (1S,2R)-1-C-(indol-3-yl)glycerol 3-phosphate + L-serine = D-glyceraldehyde 3-phosphate + L-tryptophan + H2O. It functions in the pathway amino-acid biosynthesis; L-tryptophan biosynthesis; L-tryptophan from chorismate: step 5/5. Its function is as follows. The beta subunit is responsible for the synthesis of L-tryptophan from indole and L-serine. In Streptococcus pneumoniae (strain JJA), this protein is Tryptophan synthase beta chain.